The chain runs to 117 residues: Immunoglobulin kappa variable 1D-16 (117 aa).

Residues 1-22 (MDMRVLAQLLGLLLLCFPGARC) form the signal peptide. The tract at residues 23–45 (DIQMTQSPSSLSASVGDRVTITC) is framework-1. One can recognise an Ig-like domain in the interval 24–117 (IQMTQSPSSL…YYCQQYNSYP (94 aa)). Cys-45 and Cys-110 form a disulfide bridge. The complementarity-determining-1 stretch occupies residues 46–56 (RASQGISSWLA). A framework-2 region spans residues 57–71 (WYQQKPEKAPKSLIY). Residues 72 to 78 (AASSLQS) are complementarity-determining-2. Residues 79–110 (GVPSRFSGSGSGTDFTLTISSLQPEDFATYYC) form a framework-3 region. Residues 111–117 (QQYNSYP) form a complementarity-determining-3 region.

Immunoglobulins are composed of two identical heavy chains and two identical light chains; disulfide-linked.

It localises to the secreted. The protein resides in the cell membrane. Its function is as follows. V region of the variable domain of immunoglobulin light chains that participates in the antigen recognition. Immunoglobulins, also known as antibodies, are membrane-bound or secreted glycoproteins produced by B lymphocytes. In the recognition phase of humoral immunity, the membrane-bound immunoglobulins serve as receptors which, upon binding of a specific antigen, trigger the clonal expansion and differentiation of B lymphocytes into immunoglobulins-secreting plasma cells. Secreted immunoglobulins mediate the effector phase of humoral immunity, which results in the elimination of bound antigens. The antigen binding site is formed by the variable domain of one heavy chain, together with that of its associated light chain. Thus, each immunoglobulin has two antigen binding sites with remarkable affinity for a particular antigen. The variable domains are assembled by a process called V-(D)-J rearrangement and can then be subjected to somatic hypermutations which, after exposure to antigen and selection, allow affinity maturation for a particular antigen. This chain is Immunoglobulin kappa variable 1D-16, found in Homo sapiens (Human).